A 296-amino-acid chain; its full sequence is tRNA (guanine-N(7)-)-methyltransferase (296 aa).

Positions 1-26 (MSKRTREESEMEAGPSTASPGVSVSP) are disordered. S-adenosyl-L-methionine contacts are provided by residues Gly-101, 124 to 125 (EI), 168 to 169 (NS), and Leu-188. The active site involves Asp-191. Position 266 to 268 (266 to 268 (TEE)) interacts with S-adenosyl-L-methionine.

It belongs to the class I-like SAM-binding methyltransferase superfamily. TrmB family. Forms a complex with TRM82.

The protein resides in the nucleus. The catalysed reaction is guanosine(46) in tRNA + S-adenosyl-L-methionine = N(7)-methylguanosine(46) in tRNA + S-adenosyl-L-homocysteine. It participates in tRNA modification; N(7)-methylguanine-tRNA biosynthesis. Functionally, catalyzes the formation of N(7)-methylguanine at position 46 (m7G46) in tRNA. The polypeptide is tRNA (guanine-N(7)-)-methyltransferase (Cryptococcus neoformans var. neoformans serotype D (strain JEC21 / ATCC MYA-565) (Filobasidiella neoformans)).